The primary structure comprises 430 residues: Adenylosuccinate synthetase (430 aa).

GTP contacts are provided by residues Gly12–Lys18 and Gly40–Thr42. Asp13 acts as the Proton acceptor in catalysis. Mg(2+) contacts are provided by Asp13 and Gly40. IMP-binding positions include Asp13–Lys16, Asn38–His41, Thr129, Arg143, Gln223, Thr238, and Arg302. His41 acts as the Proton donor in catalysis. Thr298 to Arg304 lines the substrate pocket. Residues Arg304, Lys330 to Asp332, and Ser412 to Gly414 contribute to the GTP site.

This sequence belongs to the adenylosuccinate synthetase family. As to quaternary structure, homodimer. Requires Mg(2+) as cofactor.

The protein resides in the cytoplasm. The catalysed reaction is IMP + L-aspartate + GTP = N(6)-(1,2-dicarboxyethyl)-AMP + GDP + phosphate + 2 H(+). Its pathway is purine metabolism; AMP biosynthesis via de novo pathway; AMP from IMP: step 1/2. Functionally, plays an important role in the de novo pathway of purine nucleotide biosynthesis. Catalyzes the first committed step in the biosynthesis of AMP from IMP. The chain is Adenylosuccinate synthetase from Desulforudis audaxviator (strain MP104C).